Consider the following 248-residue polypeptide: MSFVVIIPARFSSTRLPGKPLVDINGKPMIVHVLERARESGAERIIVATDHEDVARAVEAAGGEVCMTRADHQSGTERLAEVVEKCGFTDDTVIVNVQGDEPMIPAVIIRQVAENLAQRQVGMATLAVPIHSAEEAFNPNAVKVVLDAEGYALYFSRATIPWDRDRFAKSLETVGDTCLRHLGIYGYRAGFIRRYVSWQPSPLEHIEMLEQLRVLWYGEKIHVAVAKAVPGTGVDTADDLERVRAEMR.

The protein belongs to the KdsB family.

It is found in the cytoplasm. It carries out the reaction 3-deoxy-alpha-D-manno-oct-2-ulosonate + CTP = CMP-3-deoxy-beta-D-manno-octulosonate + diphosphate. Its pathway is nucleotide-sugar biosynthesis; CMP-3-deoxy-D-manno-octulosonate biosynthesis; CMP-3-deoxy-D-manno-octulosonate from 3-deoxy-D-manno-octulosonate and CTP: step 1/1. The protein operates within bacterial outer membrane biogenesis; lipopolysaccharide biosynthesis. Functionally, activates KDO (a required 8-carbon sugar) for incorporation into bacterial lipopolysaccharide in Gram-negative bacteria. The chain is 3-deoxy-manno-octulosonate cytidylyltransferase from Salmonella typhi.